The following is a 422-amino-acid chain: MILVKDAIITGKKQDLLVEGNIIKKIGNISISEVSKDETEIIDGKNCVLIPGLINTHTHVPMSLFRGVADDIPLMEWLSGHIWPMESKLNEKIVYAGTLLGTIEMIKSGTTAFNDMYFFLDSIIKAVDETGIRSTIAYGMIDLFDEEKREKELKTAKESLEMIKNLNNSRITGALGPHAPYTCSKEILESTNALAREYNVPIHIHMNETLDEINQVVEKTGMRPFEYLNSFGFFDNVNTICAHCVHLSASEIQIMKEKNIFAAHNPVSNLKLASGVSPVLKLLENNIPVTLGTDGCGSNNNMNLFEEIKAAALIHKGVNLNPVAVIAKDAFDFGTKNGAKALNINSGEIKEGKLADFVLINMKKPYLTPKENIESHLVYSFNGVVDKVVIDGKLVLNDGKMVNIDEEKVYEIAEEAYFELAN.

Residues histidine 57 and histidine 59 each coordinate Zn(2+). 2 residues coordinate substrate: glutamate 86 and histidine 178. Histidine 205 lines the Zn(2+) pocket. 2 residues coordinate substrate: glutamate 208 and aspartate 294. Aspartate 294 is a binding site for Zn(2+).

This sequence belongs to the metallo-dependent hydrolases superfamily. MTA/SAH deaminase family. In terms of assembly, homotetramer. Zn(2+) is required as a cofactor.

The catalysed reaction is 5'-deoxyadenosine + H2O + H(+) = 5'-deoxyinosine + NH4(+). It catalyses the reaction S-adenosyl-L-homocysteine + H2O + H(+) = S-inosyl-L-homocysteine + NH4(+). The enzyme catalyses S-methyl-5'-thioadenosine + H2O + H(+) = S-methyl-5'-thioinosine + NH4(+). It carries out the reaction adenosine + H2O + H(+) = inosine + NH4(+). It participates in amino-acid biosynthesis; S-adenosyl-L-methionine biosynthesis. Functionally, catalyzes the deamination of three SAM-derived enzymatic products, namely 5'-deoxyadenosine, S-adenosyl-L-homocysteine, and 5'-methylthioadenosine, to produce the inosine analogs. Can also deaminate adenosine. The preferred substrate for this enzyme is 5'-deoxyadenosine, but all these substrates are efficiently deaminated. Likely functions in a S-adenosyl-L-methionine (SAM) recycling pathway from S-adenosyl-L-homocysteine (SAH) produced from SAM-dependent methylation reactions. May also be involved in the recycling of 5'-deoxyadenosine, whereupon the 5'-deoxyribose moiety of 5'-deoxyinosine is further metabolized to deoxyhexoses used for the biosynthesis of aromatic amino acids in methanogens. The protein is 5'-deoxyadenosine deaminase of Methanococcus maripaludis (strain DSM 14266 / JCM 13030 / NBRC 101832 / S2 / LL).